A 170-amino-acid chain; its full sequence is Large ribosomal subunit protein uL18c (170 aa).

The transit peptide at 1–63 (MLASPALAGA…QADRIARHVR (63 aa)) directs the protein to the chloroplast.

Belongs to the universal ribosomal protein uL18 family. As to quaternary structure, part of the 50S ribosomal subunit; contacts the 5S rRNA.

The protein localises to the plastid. The protein resides in the chloroplast. Its function is as follows. Binds 5S rRNA, forms part of the central protuberance of the 50S subunit. This is Large ribosomal subunit protein uL18c (RPL18) from Oryza sativa subsp. japonica (Rice).